Here is a 308-residue protein sequence, read N- to C-terminus: CASP-like protein 4A2 (308 aa).

Residues 1 to 135 (MALEAQPSPS…APAPAPRVPA (135 aa)) are disordered. The Cytoplasmic segment spans residues 1 to 161 (MALEAQPSPS…KRPTAVLQRT (161 aa)). Over residues 22 to 31 (GGAGAPGGSA) the composition is skewed to gly residues. Low complexity predominate over residues 32–44 (GDADAQARRATSG). Pro residues-rich tracts occupy residues 54–65 (RRSPPPPFPRTP) and 89–132 (FQPP…PAPR). Residues 162 to 182 (ALVARVAAALLCLAALAVLAA) form a helical membrane-spanning segment. Residues 183–203 (DSRKGFALDSYSNYSQLRYSE) are Extracellular-facing. N-linked (GlcNAc...) asparagine glycosylation occurs at Asn-195. A helical transmembrane segment spans residues 204–224 (AVNVIGFVYSVLQFFVLADLM). Residues 225–240 (RRNKHLNPRRKGDYFD) lie on the Cytoplasmic side of the membrane. Residues 241–262 (FFMDQVLAYLLISSSSSATARV) traverse the membrane as a helical segment. Over 263–280 (GDWIDNWGSDPFPKMANS) the chain is Extracellular. Residue Asn-279 is glycosylated (N-linked (GlcNAc...) asparagine). A helical membrane pass occupies residues 281–301 (SIAISFMAFLVFAISALISAY). Topologically, residues 302–308 (NLFRRDI) are cytoplasmic.

The protein belongs to the Casparian strip membrane proteins (CASP) family. As to quaternary structure, homodimer and heterodimers.

Its subcellular location is the cell membrane. The polypeptide is CASP-like protein 4A2 (Oryza sativa subsp. japonica (Rice)).